Consider the following 1820-residue polypeptide: Cation channel sperm-associated targeting subunit tau (1820 aa).

In terms of domain architecture, C2 spans 87–222; that stretch reads DSEELEITQE…QKGCFIEEVQ (136 aa). Disordered regions lie at residues 360–383, 403–443, 695–722, and 838–857; these read SEET…ELEN, LLDN…TEVH, EVSM…SSME, and SSTK…SGSS. Polar residues predominate over residues 415-443; that stretch reads PTLNQSDQDNSTADASKNDESTPSPTEVH.

Component of the CatSper complex or CatSpermasome composed of the core pore-forming members CATSPER1, CATSPER2, CATSPER3 and CATSPER4 as well as auxiliary members CATSPERB, CATSPERG, CATSPERD, CATSPERE, CATSPERZ, C2CD6/CATSPERT, TMEM249, TMEM262 and EFCAB9. HSPA1 may be an additional auxiliary complex member. The core complex members CATSPER1, CATSPER2, CATSPER3 and CATSPER4 form a heterotetrameric channel. The auxiliary CATSPERB, CATSPERG, CATSPERD and CATSPERE subunits form a pavilion-like structure over the pore which stabilizes the complex through interactions with CATSPER4, CATSPER3, CATSPER1 and CATSPER2 respectively. SLCO6C1 interacts with CATSPERE and TMEM262/CATSPERH interacts with CATSPERB, further stabilizing the complex. C2CD6/CATSPERT interacts at least with CATSPERD and is required for targeting the CatSper complex in the flagellar membrane. In terms of tissue distribution, expressed in testis (at protein level).

It is found in the cell projection. The protein localises to the cilium. Its subcellular location is the flagellum membrane. Functionally, auxiliary component of the CatSper complex, a complex involved in sperm cell hyperactivation. Sperm cell hyperactivation is needed for sperm motility which is essential late in the preparation of sperm for fertilization. Required for CatSper complex targeting and trafficking into the quadrilinear nanodomains. Targets the preassembled CatSper complexes to elongating flagella, where it links the channel-carrying vesicles and motor proteins. This chain is Cation channel sperm-associated targeting subunit tau, found in Homo sapiens (Human).